A 256-amino-acid chain; its full sequence is Probable histidine-binding protein (256 aa).

The signal sequence occupies residues 1–19 (MKKFLTAFLVAFTGLFLVA). Cysteine 20 carries the N-palmitoyl cysteine lipid modification. The S-diacylglycerol cysteine moiety is linked to residue cysteine 20.

Belongs to the bacterial solute-binding protein 3 family.

The protein localises to the cell membrane. In terms of biological role, involved in histidine transport. The polypeptide is Probable histidine-binding protein (hisJ) (Campylobacter jejuni subsp. jejuni serotype O:2 (strain ATCC 700819 / NCTC 11168)).